The primary structure comprises 142 residues: 3-hydroxyacyl-[acyl-carrier-protein] dehydratase FabZ (142 aa).

His-48 is a catalytic residue.

Belongs to the thioester dehydratase family. FabZ subfamily.

It is found in the cytoplasm. It catalyses the reaction a (3R)-hydroxyacyl-[ACP] = a (2E)-enoyl-[ACP] + H2O. Its function is as follows. Involved in unsaturated fatty acids biosynthesis. Catalyzes the dehydration of short chain beta-hydroxyacyl-ACPs and long chain saturated and unsaturated beta-hydroxyacyl-ACPs. The chain is 3-hydroxyacyl-[acyl-carrier-protein] dehydratase FabZ from Prochlorococcus marinus (strain MIT 9313).